Consider the following 506-residue polypeptide: Ent-kaurenoic acid oxidase (506 aa).

The helical transmembrane segment at 11–31 threads the bilayer; the sequence is AWAAGDLWVLAAAVVAGVVLV. Cys451 lines the heme pocket.

Belongs to the cytochrome P450 family. It depends on heme as a cofactor. Expressed in roots and panicles. Expressed at low levels in vegetative shoot apices, leaf sheaths, leaf blades and stems.

It is found in the endoplasmic reticulum membrane. It carries out the reaction ent-kaur-16-en-19-oate + 3 reduced [NADPH--hemoprotein reductase] + 3 O2 = gibberellin A12 + 3 oxidized [NADPH--hemoprotein reductase] + 4 H2O + 4 H(+). It catalyses the reaction ent-kaur-16-en-19-oate + reduced [NADPH--hemoprotein reductase] + O2 = ent-7alpha-hydroxykaur-16-en-19-oate + oxidized [NADPH--hemoprotein reductase] + H2O + H(+). The enzyme catalyses ent-7alpha-hydroxykaur-16-en-19-oate + reduced [NADPH--hemoprotein reductase] + O2 = gibberellin A12 aldehyde + oxidized [NADPH--hemoprotein reductase] + 2 H2O + H(+). The catalysed reaction is gibberellin A12 aldehyde + reduced [NADPH--hemoprotein reductase] + O2 = gibberellin A12 + oxidized [NADPH--hemoprotein reductase] + H2O + 2 H(+). The protein operates within plant hormone biosynthesis; gibberellin biosynthesis. Its function is as follows. Involved in gibberellin (GA) biosynthesis. Catalyzes three successive oxidations of ent-kaurenoic acid giving gibberellin 12 (GA12), a key step in GAs biosynthesis. GAs, which are involved many processes, including stem elongation, play a central role in plant development. Required for pollen germination and elongation. The polypeptide is Ent-kaurenoic acid oxidase (Oryza sativa subsp. japonica (Rice)).